The primary structure comprises 82 residues: ATP synthase subunit c (82 aa).

2 helical membrane-spanning segments follow: residues 7–27 and 53–73; these read LVALACGIIIGLGAIGACIGI and FLLAGLIDAAFLIGVGIAMLF.

Belongs to the ATPase C chain family. In terms of assembly, F-type ATPases have 2 components, F(1) - the catalytic core - and F(0) - the membrane proton channel. F(1) has five subunits: alpha(3), beta(3), gamma(1), delta(1), epsilon(1). F(0) has three main subunits: a(1), b(2) and c(10-14). The alpha and beta chains form an alternating ring which encloses part of the gamma chain. F(1) is attached to F(0) by a central stalk formed by the gamma and epsilon chains, while a peripheral stalk is formed by the delta and b chains.

It is found in the cell inner membrane. Functionally, f(1)F(0) ATP synthase produces ATP from ADP in the presence of a proton or sodium gradient. F-type ATPases consist of two structural domains, F(1) containing the extramembraneous catalytic core and F(0) containing the membrane proton channel, linked together by a central stalk and a peripheral stalk. During catalysis, ATP synthesis in the catalytic domain of F(1) is coupled via a rotary mechanism of the central stalk subunits to proton translocation. In terms of biological role, key component of the F(0) channel; it plays a direct role in translocation across the membrane. A homomeric c-ring of between 10-14 subunits forms the central stalk rotor element with the F(1) delta and epsilon subunits. The protein is ATP synthase subunit c of Leptothrix cholodnii (strain ATCC 51168 / LMG 8142 / SP-6) (Leptothrix discophora (strain SP-6)).